Consider the following 406-residue polypeptide: Enoyl-[acyl-carrier-protein] reductase [NADH] (406 aa).

Residues 48–53 (GASTGF), 74–75 (FE), 111–112 (DA), and 140–141 (IA) each bind NAD(+). Tyr226 serves as a coordination point for substrate. Tyr236 acts as the Proton donor in catalysis. Residues Lys245 and 275-277 (LVT) contribute to the NAD(+) site.

The protein belongs to the TER reductase family. In terms of assembly, monomer.

The catalysed reaction is a 2,3-saturated acyl-[ACP] + NAD(+) = a (2E)-enoyl-[ACP] + NADH + H(+). The protein operates within lipid metabolism; fatty acid biosynthesis. Functionally, involved in the final reduction of the elongation cycle of fatty acid synthesis (FAS II). Catalyzes the reduction of a carbon-carbon double bond in an enoyl moiety that is covalently linked to an acyl carrier protein (ACP). The polypeptide is Enoyl-[acyl-carrier-protein] reductase [NADH] (Coxiella burnetii (strain Dugway 5J108-111)).